The sequence spans 62 residues: uncharacterized protein (62 aa).

Positions valine 38–methionine 62 are disordered.

This is an uncharacterized protein from Schizosaccharomyces pombe (strain 972 / ATCC 24843) (Fission yeast).